Here is a 94-residue protein sequence, read N- to C-terminus: Integration host factor subunit beta (94 aa).

Belongs to the bacterial histone-like protein family. Heterodimer of an alpha and a beta chain.

Functionally, this protein is one of the two subunits of integration host factor, a specific DNA-binding protein that functions in genetic recombination as well as in transcriptional and translational control. In Edwardsiella ictaluri (strain 93-146), this protein is Integration host factor subunit beta.